Here is a 104-residue protein sequence, read N- to C-terminus: L-rhamnose mutarotase (104 aa).

Residue Tyr-18 participates in substrate binding. The Proton donor role is filled by His-22. Substrate is bound by residues Tyr-41 and 76–77 (WW).

This sequence belongs to the rhamnose mutarotase family. In terms of assembly, homodimer.

The protein resides in the cytoplasm. It catalyses the reaction alpha-L-rhamnose = beta-L-rhamnose. It functions in the pathway carbohydrate metabolism; L-rhamnose metabolism. In terms of biological role, involved in the anomeric conversion of L-rhamnose. The chain is L-rhamnose mutarotase from Listeria monocytogenes serotype 4b (strain F2365).